A 98-amino-acid polypeptide reads, in one-letter code: SPbeta prophage-derived uncharacterized protein YorB (98 aa).

The chain is SPbeta prophage-derived uncharacterized protein YorB (yorB) from Bacillus subtilis (strain 168).